Here is a 498-residue protein sequence, read N- to C-terminus: Protein translocase subunit SecY (498 aa).

Transmembrane regions (helical) follow at residues 23-43 (FVIS…ISVI), 65-87 (FDLF…VGIS), 124-144 (ITRF…IALI), 163-183 (AFYI…GDII), 191-211 (GITL…FIVM), 229-249 (AINF…ISFV), 281-301 (AAGV…ITIA), 322-342 (PVGI…YSYI), 382-402 (FIGA…SLVL), and 406-426 (TTLS…MELY). The span at 478 to 488 (VEPTQDKKKNP) shows a compositional bias: basic and acidic residues. A disordered region spans residues 478-498 (VEPTQDKKKNPSDPLEVSQLW).

It belongs to the SecY/SEC61-alpha family. Component of the Sec protein translocase complex. Heterotrimer consisting of SecY, SecE and SecG subunits. The heterotrimers can form oligomers, although 1 heterotrimer is thought to be able to translocate proteins. Interacts with the ribosome. Interacts with SecDF, and other proteins may be involved. Interacts with SecA.

The protein localises to the cell membrane. The central subunit of the protein translocation channel SecYEG. Consists of two halves formed by TMs 1-5 and 6-10. These two domains form a lateral gate at the front which open onto the bilayer between TMs 2 and 7, and are clamped together by SecE at the back. The channel is closed by both a pore ring composed of hydrophobic SecY resides and a short helix (helix 2A) on the extracellular side of the membrane which forms a plug. The plug probably moves laterally to allow the channel to open. The ring and the pore may move independently. The polypeptide is Protein translocase subunit SecY (Mycoplasmoides gallisepticum (strain R(low / passage 15 / clone 2)) (Mycoplasma gallisepticum)).